The chain runs to 255 residues: Gene 54 protein (255 aa).

The chain is Gene 54 protein (54) from Mycobacterium phage D29 (Mycobacteriophage D29).